The following is a 360-amino-acid chain: Pyrimidine monooxygenase RutA (360 aa).

FMN-binding positions include 49–50 (IK), Asn-115, Glu-124, 140–141 (RY), and Ser-190.

Belongs to the NtaA/SnaA/DszA monooxygenase family. RutA subfamily.

The catalysed reaction is uracil + FMNH2 + NADH + O2 = (Z)-3-ureidoacrylate + FMN + NAD(+) + H2O + H(+). The enzyme catalyses thymine + FMNH2 + NADH + O2 = (Z)-2-methylureidoacrylate + FMN + NAD(+) + H2O + H(+). Its function is as follows. Catalyzes the pyrimidine ring opening between N-3 and C-4 by an unusual flavin hydroperoxide-catalyzed mechanism, adding oxygen atoms in the process to yield ureidoacrylate peracid, that immediately reacts with FMN forming ureidoacrylate and FMN-N(5)-oxide. The FMN-N(5)-oxide reacts spontaneously with NADH to produce FMN. Requires the flavin reductase RutF to regenerate FMN in vivo. This is Pyrimidine monooxygenase RutA from Bradyrhizobium sp. (strain BTAi1 / ATCC BAA-1182).